Here is a 585-residue protein sequence, read N- to C-terminus: Cytidine monophosphate-N-acetylneuraminic acid hydroxylase (585 aa).

The Rieske domain maps to 9–107; that stretch reads LSPVEVANLK…VEMDENNRLL (99 aa). Residues Cys49, His51, Cys70, and His73 each coordinate [2Fe-2S] cluster.

Belongs to the CMP-Neu5Ac hydroxylase family. [2Fe-2S] cluster is required as a cofactor.

Its subcellular location is the cytoplasm. The enzyme catalyses CMP-N-acetyl-beta-neuraminate + 2 Fe(II)-[cytochrome b5] + O2 + 2 H(+) = CMP-N-glycoloyl-beta-neuraminate + 2 Fe(III)-[cytochrome b5] + H2O. Its pathway is amino-sugar metabolism; N-acetylneuraminate metabolism. Functionally, sialic acids are components of carbohydrate chains of glycoconjugates and are involved in cell-cell recognition and cell-pathogen interactions. Catalyzes the conversion of CMP-N-acetylneuraminic acid (CMP-Neu5Ac) into its hydroxylated derivative CMP-N-glycolylneuraminic acid (CMP-Neu5Gc), a sialic acid abundantly expressed at the surface of many cells. This Pongo pygmaeus (Bornean orangutan) protein is Cytidine monophosphate-N-acetylneuraminic acid hydroxylase (CMAH).